The following is a 1110-amino-acid chain: ATP-dependent DNA helicase MPH1 (1110 aa).

Residues 24–34 show a composition bias toward polar residues; that stretch reads LNEVSDSQTGR. Disordered regions lie at residues 24-165, 178-212, and 236-305; these read LNEV…TNGK, FEEEQSARGDAEMLDDSIEEPGDTQVHATPGPVTN, and TETA…PTHH. 2 stretches are compositionally biased toward basic and acidic residues: residues 42 to 57 and 178 to 188; these read NSHEINTDSTGRREIE and FEEEQSARGDA. Over residues 189 to 199 the composition is skewed to acidic residues; the sequence is EMLDDSIEEPG. 2 stretches are compositionally biased toward polar residues: residues 246 to 273 and 287 to 300; these read ISSQPRPSQNTTRRPTASQSTSFRQTTL and QPATQTWPSSSRNE. A Helicase ATP-binding domain is found at 331–499; the sequence is IAHRALFHNL…EVIDGLSISR (169 aa). 344–351 contacts ATP; the sequence is LPTGLGKT. The short motif at 447–450 is the DEAH box element; that stretch reads DEAH. Residues 675 to 846 enclose the Helicase C-terminal domain; it reads ILNHFLDAGG…RFTFHTDKSS (172 aa). Disordered regions lie at residues 867–937, 1013–1055, and 1069–1110; these read ENSQ…PDLG, VGDP…RCGT, and NLAW…DVFE. Over residues 879–890 the composition is skewed to basic residues; sequence RSRAPKRPPKKF. Composition is skewed to basic and acidic residues over residues 891–900, 1041–1055, and 1077–1093; these read HMPDGVEKGF, QSREQPPRVEKRCGT, and EAPRPESDGTDNRDQKP.

It belongs to the DEAD box helicase family. DEAH subfamily. FANCM sub-subfamily. Interacts with the MHF histone-fold complex to form the FANCM-MHF complex.

It is found in the nucleus. It catalyses the reaction ATP + H2O = ADP + phosphate + H(+). Its function is as follows. ATP-dependent DNA helicase involved in DNA damage repair by homologous recombination and in genome maintenance. Capable of unwinding D-loops. Plays a role in limiting crossover recombinants during mitotic DNA double-strand break (DSB) repair. Component of a FANCM-MHF complex which promotes gene conversion at blocked replication forks, probably by reversal of the stalled fork. The protein is ATP-dependent DNA helicase MPH1 of Coccidioides immitis (strain RS) (Valley fever fungus).